Here is a 98-residue protein sequence, read N- to C-terminus: NADH-ubiquinone oxidoreductase chain 4L (98 aa).

3 helical membrane-spanning segments follow: residues 1–21 (MMSI…GVLI), 28–48 (STLL…ALII), and 59–79 (APLI…ALLV).

It belongs to the complex I subunit 4L family. Core subunit of respiratory chain NADH dehydrogenase (Complex I) which is composed of 45 different subunits.

It localises to the mitochondrion inner membrane. The catalysed reaction is a ubiquinone + NADH + 5 H(+)(in) = a ubiquinol + NAD(+) + 4 H(+)(out). Core subunit of the mitochondrial membrane respiratory chain NADH dehydrogenase (Complex I) which catalyzes electron transfer from NADH through the respiratory chain, using ubiquinone as an electron acceptor. Part of the enzyme membrane arm which is embedded in the lipid bilayer and involved in proton translocation. The sequence is that of NADH-ubiquinone oxidoreductase chain 4L (MT-ND4L) from Lagostrophus fasciatus (Banded hare-wallaby).